We begin with the raw amino-acid sequence, 471 residues long: Light-independent protochlorophyllide reductase subunit N (471 aa).

[4Fe-4S] cluster-binding residues include C22, C47, and C107.

Belongs to the BchN/ChlN family. In terms of assembly, protochlorophyllide reductase is composed of three subunits; ChlL, ChlN and ChlB. Forms a heterotetramer of two ChlB and two ChlN subunits. The cofactor is [4Fe-4S] cluster.

The protein resides in the plastid. It is found in the chloroplast. The enzyme catalyses chlorophyllide a + oxidized 2[4Fe-4S]-[ferredoxin] + 2 ADP + 2 phosphate = protochlorophyllide a + reduced 2[4Fe-4S]-[ferredoxin] + 2 ATP + 2 H2O. The protein operates within porphyrin-containing compound metabolism; chlorophyll biosynthesis (light-independent). Functionally, component of the dark-operative protochlorophyllide reductase (DPOR) that uses Mg-ATP and reduced ferredoxin to reduce ring D of protochlorophyllide (Pchlide) to form chlorophyllide a (Chlide). This reaction is light-independent. The NB-protein (ChlN-ChlB) is the catalytic component of the complex. In Anthoceros angustus (Hornwort), this protein is Light-independent protochlorophyllide reductase subunit N.